A 427-amino-acid chain; its full sequence is 3-phosphoshikimate 1-carboxyvinyltransferase (427 aa).

3 residues coordinate 3-phosphoshikimate: Lys22, Ser23, and Arg27. Residue Lys22 participates in phosphoenolpyruvate binding. Positions 96 and 124 each coordinate phosphoenolpyruvate. Ser169, Ser170, Gln171, Ser197, Asp313, Asn336, and Lys340 together coordinate 3-phosphoshikimate. Gln171 is a phosphoenolpyruvate binding site. Asp313 acts as the Proton acceptor in catalysis. Phosphoenolpyruvate is bound by residues Arg344, Arg386, and Lys411.

This sequence belongs to the EPSP synthase family. Monomer.

It localises to the cytoplasm. It catalyses the reaction 3-phosphoshikimate + phosphoenolpyruvate = 5-O-(1-carboxyvinyl)-3-phosphoshikimate + phosphate. It functions in the pathway metabolic intermediate biosynthesis; chorismate biosynthesis; chorismate from D-erythrose 4-phosphate and phosphoenolpyruvate: step 6/7. Its function is as follows. Catalyzes the transfer of the enolpyruvyl moiety of phosphoenolpyruvate (PEP) to the 5-hydroxyl of shikimate-3-phosphate (S3P) to produce enolpyruvyl shikimate-3-phosphate and inorganic phosphate. The sequence is that of 3-phosphoshikimate 1-carboxyvinyltransferase from Shigella sonnei.